We begin with the raw amino-acid sequence, 812 residues long: Probable inorganic carbon transporter subunit DabA (812 aa).

4 residues coordinate Zn(2+): Cys-337, Asp-339, His-499, and Cys-514.

The protein belongs to the inorganic carbon transporter (TC 9.A.2) DabA family. In terms of assembly, forms a complex with DabB. Zn(2+) is required as a cofactor.

The protein localises to the cell inner membrane. Its function is as follows. Part of an energy-coupled inorganic carbon pump. This chain is Probable inorganic carbon transporter subunit DabA, found in Xanthomonas oryzae pv. oryzae (strain KACC10331 / KXO85).